Reading from the N-terminus, the 75-residue chain is Protein Tlp homolog (75 aa).

Positions 52–75 (RREALDGMREEIKDEARDKKNGYM) are disordered.

The protein belongs to the Tlp family.

This chain is Protein Tlp homolog, found in Clostridium botulinum (strain Okra / Type B1).